A 744-amino-acid polypeptide reads, in one-letter code: MASTMMNYQDCGPMRYKSSVPVPASLYENTAYPSKFRPRISKHVDVADKACWEACDDFENATGLKLKADSVGCINPIGGNVNALWFPEAIPERLHIISYLSELLFRHDDLTDDAVTPEQFDEVHGPLARFLGSESKQSDHTTKHNAMNTMQARVAIEALEQNEQLGKLVIEKWKGIVSVRGQDAFMEHKTLDSYMHVRHYDAGAYSVWSQILFCCDISLTDEELTGLEPLTWLAFTQMILWHDYCSWDKEAATYLEREEGGSNMSAVQVYMAMYGLDQYAAKEFLLSEITRIEDEYCERKASYMIEFPPAPHITHYIGLIEMCMAGNTLWHLSSRRYNPAAPLPRREDIGKVNGGPLDASEVSKPVECSESDLGILTPVSSRLSTKRLRPFWNNQRTEYTTMTPAETSSDDKKKKAKASHETREDLLTVSPCAWPAEPDEKDILAAYLYTAARPASGARDKLMDALDKWYRVPPDALATIRTIIRIMHNASLMLDDVQDNSPVRRGSPSAHVIFGTAQTTNSASYLMIKCVDLARRLGDDSLSCLLSELSQLHLGQSHDLAWTFHCKAPSIPEYYSHLEQKTGGLFRMASRMMRASATQNKHLDACKLMSLLGRLYQLRDDYQDITSESLSTYDDLDEGSFTLPLIHALHREEEQGEVQLHSILQSARAARSASASSNNDGKLSVETKLLIREMLEEAGSLEHTRVVIRGLYDETRAVLTAMENEAGSGGKNWMLHLITFQLKV.

A terpene cyclase region spans residues 1 to 344; that stretch reads MASTMMNYQD…RRYNPAAPLP (344 aa). Asp108 and Asp112 together coordinate Mg(2+). Substrate is bound by residues Asp108, Asp112, 198-201, 246-250, and 336-337; these read RHYD, SWDKE, and RY. A DDXXD motif is present at residues 108–112; the sequence is DDLTD. A prenyltransferase region spans residues 345-744; it reads RREDIGKVNG…LHLITFQLKV (400 aa). The interval 399–422 is disordered; that stretch reads YTTMTPAETSSDDKKKKAKASHET. The segment covering 409–422 has biased composition (basic and acidic residues); sequence SDDKKKKAKASHET. Arg459 and His488 together coordinate isopentenyl diphosphate. The Mg(2+) site is built by Asp495 and Asp499. The DDXXD motif lies at 495–499; the sequence is DDVQD. Position 504 (Arg504) interacts with dimethylallyl diphosphate. Position 505 (Arg505) interacts with isopentenyl diphosphate. Lys581, Thr582, and Gln617 together coordinate dimethylallyl diphosphate.

It in the N-terminal section; belongs to the terpene synthase family. The protein in the C-terminal section; belongs to the FPP/GGPP synthase family. As to quaternary structure, hexamer. It depends on Mg(2+) as a cofactor.

The enzyme catalyses isopentenyl diphosphate + (2E,6E)-farnesyl diphosphate = (2E,6E,10E)-geranylgeranyl diphosphate + diphosphate. The catalysed reaction is (2E,6E,10E)-geranylgeranyl diphosphate = (5R,12R,14S)-dolasta-1(15),8-diene + diphosphate. It carries out the reaction (2E,6E,10E)-geranylgeranyl diphosphate = delta-araneosene + diphosphate. Bifunctional terpene synthase involved in the biosynthesis of the diterpenes delta-araneosene and dolasta-1(15),8-diene. The C-terminal prenyltransferase domain of CgDS catalyzes formation of the universal precursor of diterpene, geranylgeranyl diphosphate (GGPP), whereas the N-terminal terpene cyclase domain catalyzes the cyclization of GGPP to the intermediate delta-araneosene that is further converted to dolasta-1(15),8-diene in a second cyclization event. In some cases the cyclization stops at the delta-araneosene stage. The sequence is that of Dolasta-1(15),8-diene synthase from Colletotrichum gloeosporioides (Anthracnose fungus).